The sequence spans 104 residues: Thioredoxin (104 aa).

One can recognise a Thioredoxin domain in the interval 2–104 (AIVKVTDSNF…NLAEVIEKHL (103 aa)). A disulfide bond links Cys29 and Cys32.

Belongs to the thioredoxin family.

Its function is as follows. Component of the thioredoxin-thioredoxin reductase system. Participates in various redox reactions through the reversible oxidation of its active center dithiol to a disulfide and catalyzes dithiol-disulfide exchange reactions. The polypeptide is Thioredoxin (trxA) (Staphylococcus saprophyticus subsp. saprophyticus (strain ATCC 15305 / DSM 20229 / NCIMB 8711 / NCTC 7292 / S-41)).